Consider the following 434-residue polypeptide: 3-phosphoshikimate 1-carboxyvinyltransferase (434 aa).

Lys-22, Ser-23, and Arg-27 together coordinate 3-phosphoshikimate. Lys-22 is a phosphoenolpyruvate binding site. The phosphoenolpyruvate site is built by Gly-94 and Arg-122. 3-phosphoshikimate-binding residues include Ser-169, Ser-170, Gln-171, Ser-199, Asp-320, and Lys-347. Gln-171 serves as a coordination point for phosphoenolpyruvate. Asp-320 functions as the Proton acceptor in the catalytic mechanism. Residues Arg-351, Arg-395, and Lys-420 each coordinate phosphoenolpyruvate.

It belongs to the EPSP synthase family. Monomer.

It is found in the cytoplasm. It carries out the reaction 3-phosphoshikimate + phosphoenolpyruvate = 5-O-(1-carboxyvinyl)-3-phosphoshikimate + phosphate. It functions in the pathway metabolic intermediate biosynthesis; chorismate biosynthesis; chorismate from D-erythrose 4-phosphate and phosphoenolpyruvate: step 6/7. In terms of biological role, catalyzes the transfer of the enolpyruvyl moiety of phosphoenolpyruvate (PEP) to the 5-hydroxyl of shikimate-3-phosphate (S3P) to produce enolpyruvyl shikimate-3-phosphate and inorganic phosphate. The polypeptide is 3-phosphoshikimate 1-carboxyvinyltransferase (Ralstonia pickettii (strain 12J)).